Consider the following 280-residue polypeptide: Vitamin B12-binding protein (280 aa).

The N-terminal stretch at 1–27 (MMPLGLFPLPRAAAVLLISLLTLPAQA) is a signal peptide. The 248-residue stretch at 30–277 (RVISLSPSTT…QMASIPTPVA (248 aa)) folds into the Fe/B12 periplasmic-binding domain. Tyrosine 57 is a binding site for cyanocob(III)alamin. A disulfide bridge links cysteine 190 with cysteine 266.

The protein belongs to the BtuF family. As to quaternary structure, the complex is composed of two ATP-binding proteins (BtuD), two transmembrane proteins (BtuC) and a solute-binding protein (BtuF).

The protein resides in the periplasm. Its function is as follows. Part of the ABC transporter complex BtuCDF involved in vitamin B12 import. Binds vitamin B12 and delivers it to the periplasmic surface of BtuC. This is Vitamin B12-binding protein from Yersinia pestis bv. Antiqua (strain Antiqua).